Here is a 399-residue protein sequence, read N- to C-terminus: Elongation factor Tu (399 aa).

Residues 10 to 204 (KDHVNIGTIG…AVDDYIDTPE (195 aa)) form the tr-type G domain. The tract at residues 19 to 26 (GHVDHGKT) is G1. 19-26 (GHVDHGKT) provides a ligand contact to GTP. Residue Thr-26 coordinates Mg(2+). The G2 stretch occupies residues 60-64 (GITIN). The G3 stretch occupies residues 81–84 (DCPG). GTP is bound by residues 81 to 85 (DCPGH) and 136 to 139 (NKKD). A G4 region spans residues 136-139 (NKKD). Positions 174–176 (SAL) are G5.

Belongs to the TRAFAC class translation factor GTPase superfamily. Classic translation factor GTPase family. EF-Tu/EF-1A subfamily. Monomer.

Its subcellular location is the cytoplasm. The catalysed reaction is GTP + H2O = GDP + phosphate + H(+). Its function is as follows. GTP hydrolase that promotes the GTP-dependent binding of aminoacyl-tRNA to the A-site of ribosomes during protein biosynthesis. The polypeptide is Elongation factor Tu (Synechocystis sp. (strain ATCC 27184 / PCC 6803 / Kazusa)).